Reading from the N-terminus, the 263-residue chain is MINAGVTGASGRMGKLIIENIIKMEGIQLSSAFDLMNIGKDVGEVAQTGKLDVNISDVADMATVLKESKTNVVIDFTIAPATVANAPVVAGAGVDLIIGTTGFSDEQRATIEGAIIKNGTSAVISPNYSVGVNVFFKILQETAKYLSEYDIEIIEAHHNQKKDAPSGTAMKAAEVISETLGGKDFVYGREGLAPRDKEIGIHAVRGGDIVGDHTVLFAGDGERIEIKHQAHSRNAFASGAVKAAIWINNAGPGIHTMDDILGS.

NAD(+)-binding positions include 8–13, Asp-34, 99–101, and 125–128; these read GASGRM, GTT, and SPNY. His-157 serves as the catalytic Proton donor/acceptor. His-158 lines the (S)-2,3,4,5-tetrahydrodipicolinate pocket. Residue Lys-161 is the Proton donor of the active site. Position 167–168 (167–168) interacts with (S)-2,3,4,5-tetrahydrodipicolinate; it reads GT.

Belongs to the DapB family.

It localises to the cytoplasm. It carries out the reaction (S)-2,3,4,5-tetrahydrodipicolinate + NAD(+) + H2O = (2S,4S)-4-hydroxy-2,3,4,5-tetrahydrodipicolinate + NADH + H(+). It catalyses the reaction (S)-2,3,4,5-tetrahydrodipicolinate + NADP(+) + H2O = (2S,4S)-4-hydroxy-2,3,4,5-tetrahydrodipicolinate + NADPH + H(+). The protein operates within amino-acid biosynthesis; L-lysine biosynthesis via DAP pathway; (S)-tetrahydrodipicolinate from L-aspartate: step 4/4. In terms of biological role, catalyzes the conversion of 4-hydroxy-tetrahydrodipicolinate (HTPA) to tetrahydrodipicolinate. This Methanococcoides burtonii (strain DSM 6242 / NBRC 107633 / OCM 468 / ACE-M) protein is 4-hydroxy-tetrahydrodipicolinate reductase.